The primary structure comprises 141 residues: Nucleoside triphosphatase NudI (141 aa).

Positions 1–141 constitute a Nudix hydrolase domain; it reads MRQRTIVCPL…RKTLSLKGLL (141 aa). A Nudix box motif is present at residues 38 to 59; the sequence is GGVEPGERIEDALRREIREELG.

This sequence belongs to the Nudix hydrolase family. NudI subfamily. As to quaternary structure, monomer. The cofactor is Mg(2+).

It carries out the reaction a ribonucleoside 5'-triphosphate + H2O = a ribonucleoside 5'-phosphate + diphosphate + H(+). The enzyme catalyses a 2'-deoxyribonucleoside 5'-triphosphate + H2O = a 2'-deoxyribonucleoside 5'-phosphate + diphosphate + H(+). The catalysed reaction is dUTP + H2O = dUMP + diphosphate + H(+). It catalyses the reaction dTTP + H2O = dTMP + diphosphate + H(+). It carries out the reaction dCTP + H2O = dCMP + diphosphate + H(+). Functionally, catalyzes the hydrolysis of nucleoside triphosphates, with a preference for pyrimidine deoxynucleoside triphosphates (dUTP, dTTP and dCTP). In Escherichia fergusonii (strain ATCC 35469 / DSM 13698 / CCUG 18766 / IAM 14443 / JCM 21226 / LMG 7866 / NBRC 102419 / NCTC 12128 / CDC 0568-73), this protein is Nucleoside triphosphatase NudI.